Here is a 209-residue protein sequence, read N- to C-terminus: MVSDNSGNLYIVAAPSGGGKTSLVKKLIEMVGEIEVSVSHTTRPMRPGEKEGVDYFFIDEEQFISMVNEGAFIEHAKVFNHWYGTSVAQINKRLQFGIDVVLDIDWQGAEQIRHAYPDAVSVFIIPPSLDALKERLMNRRQDKDNVISERMTKAQDELGHYPEFDYLIVNDDFEKAAMELQSIVIANRLRIEKQANKQAKLLSFLLSSQ.

In terms of domain architecture, Guanylate kinase-like spans 7–185; it reads GNLYIVAAPS…AAMELQSIVI (179 aa). 14–21 provides a ligand contact to ATP; it reads APSGGGKT.

Belongs to the guanylate kinase family.

Its subcellular location is the cytoplasm. It carries out the reaction GMP + ATP = GDP + ADP. In terms of biological role, essential for recycling GMP and indirectly, cGMP. In Legionella pneumophila (strain Lens), this protein is Guanylate kinase.